The chain runs to 253 residues: Tryptophan synthase alpha chain (253 aa).

Residues glutamate 47 and aspartate 58 each act as proton acceptor in the active site.

This sequence belongs to the TrpA family. In terms of assembly, tetramer of two alpha and two beta chains.

The catalysed reaction is (1S,2R)-1-C-(indol-3-yl)glycerol 3-phosphate + L-serine = D-glyceraldehyde 3-phosphate + L-tryptophan + H2O. The protein operates within amino-acid biosynthesis; L-tryptophan biosynthesis; L-tryptophan from chorismate: step 5/5. Its function is as follows. The alpha subunit is responsible for the aldol cleavage of indoleglycerol phosphate to indole and glyceraldehyde 3-phosphate. This chain is Tryptophan synthase alpha chain, found in Desulforapulum autotrophicum (strain ATCC 43914 / DSM 3382 / VKM B-1955 / HRM2) (Desulfobacterium autotrophicum).